Here is a 589-residue protein sequence, read N- to C-terminus: uncharacterized protein (589 aa).

Disordered regions lie at residues 328 to 365 (LSSTSDASAAPAGVAGGGKARQMQFSQGGSGQGAEDGP), 379 to 459 (SLLG…DPSN), 525 to 555 (RSTSRLDAGEGQGDDDDEEDGQAEKYEGAVK), and 569 to 589 (VRGTKVVVQPSPPGDDSSRDM). Over residues 398–425 (VSLSSASTSARPTQRRSSLTPCSQTPQE) the composition is skewed to polar residues. Residues 426 to 445 (THQHAREALTTRMESQREAN) show a composition bias toward basic and acidic residues. A compositionally biased stretch (acidic residues) spans 536-545 (QGDDDDEEDG).

This is an uncharacterized protein from Mycosarcoma maydis (Corn smut fungus).